The following is a 361-amino-acid chain: Alternative oxidase, mitochondrial (361 aa).

A helical membrane pass occupies residues 156–178 (YLVRNVFLESVAGVPGMVAGMLR). Residues Glu-164, Glu-203, and His-206 each coordinate Fe cation. Residues 218–240 (WFMRLAVLGAQGVFFNAMFLSYL) traverse the membrane as a helical segment. Positions 254, 309, and 312 each coordinate Fe cation. Positions 318–328 (TLGNLDQNSDP) are enriched in polar residues. Residues 318–361 (TLGNLDQNSDPNPYASKYDNPNVPHPRKDIKYLKPSGWEREEVM) form a disordered region. The segment covering 343–361 (PRKDIKYLKPSGWEREEVM) has biased composition (basic and acidic residues).

It belongs to the alternative oxidase family. Requires Fe cation as cofactor.

The protein resides in the mitochondrion inner membrane. Catalyzes cyanide-resistant oxygen consumption. May increase respiration when the cytochrome respiratory pathway is restricted, or in response to low temperatures. This Venturia inaequalis (Apple scab fungus) protein is Alternative oxidase, mitochondrial (AOX1).